The following is a 438-amino-acid chain: Methylenetetrahydrofolate--tRNA-(uracil-5-)-methyltransferase TrmFO (438 aa).

Position 9-14 (9-14 (GGGLAG)) interacts with FAD.

The protein belongs to the MnmG family. TrmFO subfamily. FAD serves as cofactor.

The protein resides in the cytoplasm. The catalysed reaction is uridine(54) in tRNA + (6R)-5,10-methylene-5,6,7,8-tetrahydrofolate + NADH + H(+) = 5-methyluridine(54) in tRNA + (6S)-5,6,7,8-tetrahydrofolate + NAD(+). The enzyme catalyses uridine(54) in tRNA + (6R)-5,10-methylene-5,6,7,8-tetrahydrofolate + NADPH + H(+) = 5-methyluridine(54) in tRNA + (6S)-5,6,7,8-tetrahydrofolate + NADP(+). In terms of biological role, catalyzes the folate-dependent formation of 5-methyl-uridine at position 54 (M-5-U54) in all tRNAs. This is Methylenetetrahydrofolate--tRNA-(uracil-5-)-methyltransferase TrmFO from Lactobacillus johnsonii (strain CNCM I-12250 / La1 / NCC 533).